Consider the following 249-residue polypeptide: Triosephosphate isomerase (249 aa).

Residue 9 to 11 participates in substrate binding; the sequence is NWK. Residue His-95 is the Electrophile of the active site. Residue Glu-166 is the Proton acceptor of the active site. Residues Gly-172, Ser-211, and 232–233 contribute to the substrate site; that span reads GG.

Belongs to the triosephosphate isomerase family. In terms of assembly, homodimer.

Its subcellular location is the cytoplasm. The catalysed reaction is D-glyceraldehyde 3-phosphate = dihydroxyacetone phosphate. It participates in carbohydrate biosynthesis; gluconeogenesis. Its pathway is carbohydrate degradation; glycolysis; D-glyceraldehyde 3-phosphate from glycerone phosphate: step 1/1. Its function is as follows. Involved in the gluconeogenesis. Catalyzes stereospecifically the conversion of dihydroxyacetone phosphate (DHAP) to D-glyceraldehyde-3-phosphate (G3P). This chain is Triosephosphate isomerase, found in Legionella pneumophila subsp. pneumophila (strain Philadelphia 1 / ATCC 33152 / DSM 7513).